Here is a 365-residue protein sequence, read N- to C-terminus: Peptide chain release factor 2 (365 aa).

Q252 is modified (N5-methylglutamine).

Belongs to the prokaryotic/mitochondrial release factor family. In terms of processing, methylated by PrmC. Methylation increases the termination efficiency of RF2.

The protein localises to the cytoplasm. In terms of biological role, peptide chain release factor 2 directs the termination of translation in response to the peptide chain termination codons UGA and UAA. The protein is Peptide chain release factor 2 of Aliivibrio fischeri (strain ATCC 700601 / ES114) (Vibrio fischeri).